The sequence spans 487 residues: N-succinylglutamate 5-semialdehyde dehydrogenase (487 aa).

221–226 (GSSRTG) provides a ligand contact to NAD(+). Catalysis depends on residues Glu-244 and Cys-278.

The protein belongs to the aldehyde dehydrogenase family. AstD subfamily.

The catalysed reaction is N-succinyl-L-glutamate 5-semialdehyde + NAD(+) + H2O = N-succinyl-L-glutamate + NADH + 2 H(+). It participates in amino-acid degradation; L-arginine degradation via AST pathway; L-glutamate and succinate from L-arginine: step 4/5. Its function is as follows. Catalyzes the NAD-dependent reduction of succinylglutamate semialdehyde into succinylglutamate. The protein is N-succinylglutamate 5-semialdehyde dehydrogenase (astD) of Pseudomonas aeruginosa (strain ATCC 15692 / DSM 22644 / CIP 104116 / JCM 14847 / LMG 12228 / 1C / PRS 101 / PAO1).